A 241-amino-acid chain; its full sequence is Keratin-associated protein 5-5 (241 aa).

Tandem repeats lie at residues 35 to 38, 41 to 44, 47 to 50, 105 to 108, 115 to 118, 133 to 136, 143 to 146, 161 to 164, 171 to 174, 181 to 184, 191 to 194, 201 to 204, 211 to 214, 221 to 224, and 231 to 234. The segment at 35–234 is 15 X 4 AA repeats of C-C-X-P; that stretch reads CCKPVCCCKP…CCCQSSCCAP (200 aa).

The protein belongs to the KRTAP type 5 family. As to quaternary structure, interacts with hair keratins.

Functionally, in the hair cortex, hair keratin intermediate filaments are embedded in an interfilamentous matrix, consisting of hair keratin-associated protein (KRTAP), which are essential for the formation of a rigid and resistant hair shaft through their extensive disulfide bond cross-linking with abundant cysteine residues of hair keratins. The matrix proteins include the high-sulfur and high-glycine-tyrosine keratins. The chain is Keratin-associated protein 5-5 from Mus musculus (Mouse).